A 579-amino-acid chain; its full sequence is CTP synthase (579 aa).

The segment at 1–281 is amidoligase domain; the sequence is MPALRKHPQT…DAYVVRRLNL (281 aa). Serine 23 lines the CTP pocket. Serine 23 provides a ligand contact to UTP. ATP-binding positions include 24–29 and aspartate 81; that span reads SLGKGL. Positions 81 and 155 each coordinate Mg(2+). CTP contacts are provided by residues 162–164, 202–207, and lysine 238; these read DIE and KTKPTQ. Residues 202-207 and lysine 238 each bind UTP; that span reads KTKPTQ. In terms of domain architecture, Glutamine amidotransferase type-1 spans 306–554; sequence RIALVGKYID…IGAALDYKAA (249 aa). Glycine 369 lines the L-glutamine pocket. Cysteine 396 functions as the Nucleophile; for glutamine hydrolysis in the catalytic mechanism. L-glutamine is bound by residues 397 to 400, glutamate 419, and arginine 480; that span reads LGLQ. Residues histidine 527 and glutamate 529 contribute to the active site.

It belongs to the CTP synthase family. In terms of assembly, homotetramer.

It carries out the reaction UTP + L-glutamine + ATP + H2O = CTP + L-glutamate + ADP + phosphate + 2 H(+). The catalysed reaction is L-glutamine + H2O = L-glutamate + NH4(+). It catalyses the reaction UTP + NH4(+) + ATP = CTP + ADP + phosphate + 2 H(+). It functions in the pathway pyrimidine metabolism; CTP biosynthesis via de novo pathway; CTP from UDP: step 2/2. With respect to regulation, allosterically activated by GTP, when glutamine is the substrate; GTP has no effect on the reaction when ammonia is the substrate. The allosteric effector GTP functions by stabilizing the protein conformation that binds the tetrahedral intermediate(s) formed during glutamine hydrolysis. Inhibited by the product CTP, via allosteric rather than competitive inhibition. Its function is as follows. Catalyzes the ATP-dependent amination of UTP to CTP with either L-glutamine or ammonia as the source of nitrogen. Regulates intracellular CTP levels through interactions with the four ribonucleotide triphosphates. This Mycobacterium sp. (strain KMS) protein is CTP synthase.